The sequence spans 1342 residues: DNA-directed RNA polymerase subunit beta (1342 aa).

This sequence belongs to the RNA polymerase beta chain family. The RNAP catalytic core consists of 2 alpha, 1 beta, 1 beta' and 1 omega subunit. When a sigma factor is associated with the core the holoenzyme is formed, which can initiate transcription.

The catalysed reaction is RNA(n) + a ribonucleoside 5'-triphosphate = RNA(n+1) + diphosphate. Its function is as follows. DNA-dependent RNA polymerase catalyzes the transcription of DNA into RNA using the four ribonucleoside triphosphates as substrates. In Yersinia enterocolitica serotype O:8 / biotype 1B (strain NCTC 13174 / 8081), this protein is DNA-directed RNA polymerase subunit beta.